The chain runs to 388 residues: Na(+)/H(+) antiporter NhaA (388 aa).

Topologically, residues 1 to 11 (MKHLHRFFSSD) are cytoplasmic. A helical transmembrane segment spans residues 12–31 (ASGGIILIIAAVLAMIMANS). The Periplasmic portion of the chain corresponds to 32 to 58 (GATSGWYHDFLETPVQLRVGTLEINKN). Residues 59-80 (MLLWINDALMAVFFLLVGLEVK) form a helical membrane-spanning segment. Residues 81 to 96 (RELMQGSLASLRQAAF) lie on the Cytoplasmic side of the membrane. A helical membrane pass occupies residues 97–116 (PVIAAIGGMIVPALLYLAFN). Residues 117 to 122 (YADPIT) are Periplasmic-facing. The helical transmembrane segment at 123-130 (REGWAIPA) threads the bilayer. The Cytoplasmic segment spans residues 131–154 (ATDIAFALGVLALLGSRVPLALKI). Residues 155-176 (FLMALAIIDDLGAIIIIALFYT) form a helical membrane-spanning segment. The Periplasmic segment spans residues 177–180 (NDLS). Residues 181–200 (MASLGVAAVAIAVLAVLNLC) traverse the membrane as a helical segment. Residues 201-204 (GVRR) are Cytoplasmic-facing. The chain crosses the membrane as a helical span at residues 205-222 (TGVYILVGVVLWTAVLKS). A topological domain (periplasmic) is located at residue glycine 223. A helical transmembrane segment spans residues 224 to 236 (VHATLAGVIVGFF). The Cytoplasmic segment spans residues 237-253 (IPLKEKHGRSPAKRLEH). A helical membrane pass occupies residues 254–272 (VLHPWVAYLILPLFAFANA). Over 273–286 (GVSLQGVTLEGLTS) the chain is Periplasmic. The helical transmembrane segment at 287-310 (ILPLGIIAGLLIGKPLGISLFCWL) threads the bilayer. Over 311 to 339 (ALRLKLAHLPEGTTYQQIMAVGILCGIGF) the chain is Cytoplasmic. Residues 340–350 (TMSIFIASLAF) form a helical membrane-spanning segment. The Periplasmic portion of the chain corresponds to 351–357 (GSVDPEL). A helical membrane pass occupies residues 358–380 (INWAKLGILVGSISSAVIGYSWL). Residues 381–388 (RVRLRPSV) lie on the Cytoplasmic side of the membrane.

This sequence belongs to the NhaA Na(+)/H(+) (TC 2.A.33) antiporter family.

The protein resides in the cell inner membrane. It catalyses the reaction Na(+)(in) + 2 H(+)(out) = Na(+)(out) + 2 H(+)(in). In terms of biological role, na(+)/H(+) antiporter that extrudes sodium in exchange for external protons. The chain is Na(+)/H(+) antiporter NhaA from Escherichia coli O6:K15:H31 (strain 536 / UPEC).